The following is a 99-amino-acid chain: Aspartyl/glutamyl-tRNA(Asn/Gln) amidotransferase subunit C (99 aa).

It belongs to the GatC family. As to quaternary structure, heterotrimer of A, B and C subunits.

It carries out the reaction L-glutamyl-tRNA(Gln) + L-glutamine + ATP + H2O = L-glutaminyl-tRNA(Gln) + L-glutamate + ADP + phosphate + H(+). The catalysed reaction is L-aspartyl-tRNA(Asn) + L-glutamine + ATP + H2O = L-asparaginyl-tRNA(Asn) + L-glutamate + ADP + phosphate + 2 H(+). Allows the formation of correctly charged Asn-tRNA(Asn) or Gln-tRNA(Gln) through the transamidation of misacylated Asp-tRNA(Asn) or Glu-tRNA(Gln) in organisms which lack either or both of asparaginyl-tRNA or glutaminyl-tRNA synthetases. The reaction takes place in the presence of glutamine and ATP through an activated phospho-Asp-tRNA(Asn) or phospho-Glu-tRNA(Gln). The polypeptide is Aspartyl/glutamyl-tRNA(Asn/Gln) amidotransferase subunit C (Bifidobacterium longum (strain NCC 2705)).